The sequence spans 96 residues: Putative toxin Y4kP (96 aa).

The protein belongs to the RelE toxin family.

Functionally, toxic component of a type II toxin-antitoxin (TA) system. The sequence is that of Putative toxin Y4kP from Sinorhizobium fredii (strain NBRC 101917 / NGR234).